A 155-amino-acid polypeptide reads, in one-letter code: Phosphopantetheine adenylyltransferase (155 aa).

This sequence belongs to the eukaryotic CoaD family.

The protein resides in the cytoplasm. The catalysed reaction is (R)-4'-phosphopantetheine + ATP + H(+) = 3'-dephospho-CoA + diphosphate. The protein operates within cofactor biosynthesis; coenzyme A biosynthesis. In terms of biological role, reversibly transfers an adenylyl group from ATP to 4'-phosphopantetheine, yielding dephospho-CoA (dPCoA) and pyrophosphate. The protein is Phosphopantetheine adenylyltransferase of Pyrobaculum aerophilum (strain ATCC 51768 / DSM 7523 / JCM 9630 / CIP 104966 / NBRC 100827 / IM2).